The chain runs to 1043 residues: Non-canonical nonribosomal peptide synthetase cpsA (1043 aa).

The interval 41-386 (RRAQENPSAP…IGGDGVSPGY (346 aa)) is adenylation (A) domain. Residues 549 to 626 (QDASTTISRL…QMARYVDEGG (78 aa)) form the Carrier domain. The residue at position 586 (serine 586) is an O-(pantetheine 4'-phosphoryl)serine. Residues 671–914 (MTGATGFVGA…FVPVDYLVDA (244 aa)) form a short-chain dehydrogenase/reductase (R) domain region. Residues 672–915 (TGATGFVGAF…VPVDYLVDAI (244 aa)) enclose the Thioester reductase (TE) domain.

Belongs to the NRP synthetase family. Pantetheine 4'-phosphate is required as a cofactor.

It catalyses the reaction L-valine + ATP + NADPH + H(+) = L-valinal + AMP + diphosphate + NADP(+). The catalysed reaction is L-tryptophan + ATP + NADPH + H(+) = L-tryptophanal + AMP + diphosphate + NADP(+). It participates in alkaloid biosynthesis. Its function is as follows. Non-canonical nonribosomal peptide synthetase; part of the gene cluster that mediates the biosynthesis of campesine G, a dimeric indole piperazine alkaloid that shows good insecticidal activity Galleria mellonella. CpsA catalyzes the first steps of the pathway by producing L-tryptophanal and L-valinal from their respective amino-acids. These products condensate spontaneously to form trypyl-valyl pyrazine also known as didehydrocampesine A. The NmrA-like family domain-containing oxidoreductase cpsB is the next enzyme in cps pathway and reduces the unstable didehydrocampesine A to campesine A. The methyltransferase cpsF and the acetyltransferase cpsE both recognize N13 of piperazine ring to carry out methylation and acetylation of campesine A to produce campesine C and B, respectively. The cytochrome P450 monooxygenase cpsD then acts as a dimerase that catalyzes oxidative heterocoupling between campesine B and C to produce heterodimers with unexpected 6/5/6/6/6/6/5/6 eight-ring scaffold called campesine D. Finally,the cytochrome P450 monooxygenase cpsC is a regioselective dehydrogenase that catalyzes dehydrogenation reaction towards C2-N1 to produce campesine G. The chain is Non-canonical nonribosomal peptide synthetase cpsA from Aspergillus campestris (strain IBT 28561).